The primary structure comprises 192 residues: Secreted and transmembrane protein 1A (192 aa).

An N-terminal signal peptide occupies residues 1-27 (MMTCPSVPAIPTLWLFSILLLVVSLNA). The Extracellular segment spans residues 28-165 (QNKSWDNPIC…SSPIEGKPGT (138 aa)). N-linked (GlcNAc...) asparagine glycosylation is found at asparagine 29, asparagine 55, asparagine 84, and asparagine 127. The helical transmembrane segment at 166-186 (LVGVITVIFILGVAGFITFIY) threads the bilayer. Topologically, residues 187 to 192 (YRHRRS) are cytoplasmic.

Belongs to the SECTM family.

Its subcellular location is the cell membrane. It is found in the secreted. The polypeptide is Secreted and transmembrane protein 1A (Mus musculus (Mouse)).